The following is a 204-amino-acid chain: VQ motif-containing protein 13 (204 aa).

Residues 1-12 (MEKSPRYRDKAK) are compositionally biased toward basic and acidic residues. The disordered stretch occupies residues 1–26 (MEKSPRYRDKAKNLLPSPSSCTTTPT). A compositionally biased stretch (low complexity) spans 16–26 (PSPSSCTTTPT). Ser-17 bears the Phosphoserine mark. A VQ motif is present at residues 46–55 (FKQVVQLLTG). The disordered stretch occupies residues 56–90 (IPKNPTHQPDPRFPPFHSIPPIKAVTNKKQSSSFR). Ser-73 and Ser-128 each carry phosphoserine. Residue Thr-131 is modified to Phosphothreonine. The segment at 133–204 (LMSDPFYRPG…HSPAPSPHDH (72 aa)) is disordered. Positions 143 to 152 (SFSQSPSDSK) are enriched in low complexity. A phosphoserine mark is found at Ser-147 and Ser-173. Thr-177 and Thr-192 each carry phosphothreonine. Phosphoserine is present on residues Ser-196 and Ser-200.

Post-translationally, phosphorylated on serine and threonine residues by MPK6.

The protein localises to the nucleus. May modulate WRKY transcription factor activities. The polypeptide is VQ motif-containing protein 13 (Arabidopsis thaliana (Mouse-ear cress)).